The sequence spans 226 residues: Pre-mRNA-splicing factor SPF27 (226 aa).

Residue Ala-2 is modified to N-acetylalanine. Ser-94 is modified (phosphoserine). Positions 139–223 (YNENLVHMIE…HGEANKENIR (85 aa)) form a coiled coil.

Belongs to the SPF27 family. Component of the pre-catalytic and catalytic spliceosome complexes. Component of the postcatalytic spliceosome P complex. Component of the PRP19-CDC5L splicing complex composed of a core complex comprising a homotetramer of PRPF19, CDC5L, PLRG1 and BCAS2, and at least three less stably associated proteins CTNNBL1, CWC15 and HSPA8. Interacts directly in the complex with PRPF19, CDC5L and PLRG1.

The protein localises to the nucleus. It localises to the nucleolus. In terms of biological role, required for pre-mRNA splicing as component of the activated spliceosome. Component of the PRP19-CDC5L complex that forms an integral part of the spliceosome and is required for activating pre-mRNA splicing. May have a scaffolding role in the spliceosome assembly as it contacts all other components of the core complex. The PRP19-CDC5L complex may also play a role in the response to DNA damage (DDR). The sequence is that of Pre-mRNA-splicing factor SPF27 (BCAS2) from Pongo abelii (Sumatran orangutan).